Consider the following 717-residue polypeptide: Glutamine--fructose-6-phosphate aminotransferase [isomerizing] (717 aa).

Cys2 functions as the For GATase activity in the catalytic mechanism. Positions 2 to 318 (CGIFGYCNYL…DDDLAHIYDG (317 aa)) constitute a Glutamine amidotransferase type-2 domain. Ser253 is subject to Phosphoserine. Thr334 is modified (phosphothreonine). Ser336 carries the post-translational modification Phosphoserine. 2 consecutive SIS domains span residues 390 to 529 (WLPV…DRVS) and 562 to 707 (CATE…VDFP).

The catalysed reaction is D-fructose 6-phosphate + L-glutamine = D-glucosamine 6-phosphate + L-glutamate. Its pathway is nucleotide-sugar biosynthesis; UDP-N-acetyl-alpha-D-glucosamine biosynthesis; alpha-D-glucosamine 6-phosphate from D-fructose 6-phosphate: step 1/1. In terms of biological role, involved in amino sugar synthesis (formation of chitin, supplies the amino sugars of asparagine-linked oligosaccharides of glycoproteins). The chain is Glutamine--fructose-6-phosphate aminotransferase [isomerizing] (GFA1) from Saccharomyces cerevisiae (strain ATCC 204508 / S288c) (Baker's yeast).